Consider the following 86-residue polypeptide: Small ribosomal subunit protein bS18 (86 aa).

It belongs to the bacterial ribosomal protein bS18 family. As to quaternary structure, part of the 30S ribosomal subunit. Forms a tight heterodimer with protein bS6.

Its function is as follows. Binds as a heterodimer with protein bS6 to the central domain of the 16S rRNA, where it helps stabilize the platform of the 30S subunit. The chain is Small ribosomal subunit protein bS18 from Maridesulfovibrio salexigens (strain ATCC 14822 / DSM 2638 / NCIMB 8403 / VKM B-1763) (Desulfovibrio salexigens).